The chain runs to 1198 residues: Fibronectin type-III domain-containing protein 3A (1198 aa).

Positions 160 to 221 are disordered; sequence YGDVDAHSTH…PSPINEHNGL (62 aa). Basic and acidic residues predominate over residues 163 to 201; the sequence is VDAHSTHGRSNFRDERSSKTYERLQKKLKDRQGTQKDKM. The span at 202 to 214 shows a compositional bias: low complexity; the sequence is SSPPSSPQKCPSP. Ser-203, Ser-207, and Ser-213 each carry phosphoserine. Fibronectin type-III domains follow at residues 268–369, 373–465, 469–562, 566–660, 664–757, 761–851, 861–950, 951–1045, and 1046–1151; these read NIVK…TLSC, IPNP…TSGC, MPAS…TCPD, IPVK…TPAV, PCLP…TAPG, QCKP…TPPS, EISD…TKPL, PPDP…TPKS, and VPAA…TEPP. Lys-384 carries the post-translational modification N6-acetyllysine. A helical transmembrane segment spans residues 1177–1197; sequence ILVLFAFFSILIAFIIQYFVI.

It belongs to the FNDC3 family. As to expression, expressed in the odontoblast and nerves in the dental pulp. Also expressed in trachea and to a lesser extent in the brain, liver, lung and kidney.

It localises to the golgi apparatus membrane. Mediates spermatid-Sertoli adhesion during spermatogenesis. The chain is Fibronectin type-III domain-containing protein 3A (FNDC3A) from Homo sapiens (Human).